Reading from the N-terminus, the 545-residue chain is Threonine--tRNA ligase catalytic subunit (545 aa).

The catalytic stretch occupies residues 139 to 433 (DHRLIGEKLD…LLEHFKGKLP (295 aa)). Zn(2+) is bound by residues Cys231, His282, and His410.

Belongs to the class-II aminoacyl-tRNA synthetase family. In terms of assembly, homodimer. Probably interacts with its editing subunit. The cofactor is Zn(2+).

It localises to the cytoplasm. The enzyme catalyses tRNA(Thr) + L-threonine + ATP = L-threonyl-tRNA(Thr) + AMP + diphosphate + H(+). Functionally, catalyzes the attachment of threonine to tRNA(Thr) in a two-step reaction: L-threonine is first activated by ATP to form Thr-AMP and then transferred to the acceptor end of tRNA(Thr). Also activates L-serine and transfers it to tRNA(Thr) but cannot deacylate incorrectly charged amino acid; unlike most archaea the editing function is found in a freestanding protein. The protein is Threonine--tRNA ligase catalytic subunit of Saccharolobus islandicus (strain Y.G.57.14 / Yellowstone #1) (Sulfolobus islandicus).